A 473-amino-acid polypeptide reads, in one-letter code: Ribulose bisphosphate carboxylase large chain 2 (473 aa).

Residues N116 and T166 each coordinate substrate. Catalysis depends on K168, which acts as the Proton acceptor. K170 contacts substrate. Mg(2+) is bound by residues K194, D196, and E197. K194 carries the N6-carboxylysine modification. H287 (proton acceptor) is an active-site residue. Residues R288, H320, and S372 each coordinate substrate.

The protein belongs to the RuBisCO large chain family. Type I subfamily. As to quaternary structure, heterohexadecamer of 8 large chains and 8 small chains. It depends on Mg(2+) as a cofactor.

It carries out the reaction 2 (2R)-3-phosphoglycerate + 2 H(+) = D-ribulose 1,5-bisphosphate + CO2 + H2O. The enzyme catalyses D-ribulose 1,5-bisphosphate + O2 = 2-phosphoglycolate + (2R)-3-phosphoglycerate + 2 H(+). RuBisCO catalyzes two reactions: the carboxylation of D-ribulose 1,5-bisphosphate, the primary event in carbon dioxide fixation, as well as the oxidative fragmentation of the pentose substrate. Both reactions occur simultaneously and in competition at the same active site. The polypeptide is Ribulose bisphosphate carboxylase large chain 2 (Acidithiobacillus ferrooxidans (Thiobacillus ferrooxidans)).